A 650-amino-acid chain; its full sequence is Fructose-1,6-bisphosphatase class 3 (650 aa).

Belongs to the FBPase class 3 family. Mn(2+) serves as cofactor.

The catalysed reaction is beta-D-fructose 1,6-bisphosphate + H2O = beta-D-fructose 6-phosphate + phosphate. It functions in the pathway carbohydrate biosynthesis; gluconeogenesis. In Staphylococcus saprophyticus subsp. saprophyticus (strain ATCC 15305 / DSM 20229 / NCIMB 8711 / NCTC 7292 / S-41), this protein is Fructose-1,6-bisphosphatase class 3.